The primary structure comprises 217 residues: GRB2-related adapter protein (217 aa).

An SH3 1 domain is found at 1-58 (MESVALYSFQATESDELAFNKGDTLKILNMEDDQNWYKAELRGAEGFVPKNYIRVKPH). An SH2 domain is found at 60–152 (WYSGRISRQL…RRQIFLCDEQ (93 aa)). The 60-residue stretch at 158-217 (SRACFAQAQFDFSAQDPSQLSLRRGDIVEVVEREDPHWWRGRAGGRLGFFPRSYVQPVHL) folds into the SH3 2 domain.

It belongs to the GRB2/sem-5/DRK family. Associates through its SH2 domain with ligand-activated receptors for stem cell factor (KIT) and erythropoietin (EPOR). Also forms a stable complex with the Bcr-Abl oncoprotein. GRAP is associated with the Ras guanine nucleotide exchange factor SOS1, primarily through its N-terminal SH3 domain. Interacts with phosphorylated LAT upon TCR activation. Interacts with SHB. As to expression, expressed in inner ear, in neruonal fibers innervating cochlear and utricular auditory hair cells (at protein level).

It is found in the membrane. Its subcellular location is the synapse. Couples signals from receptor and cytoplasmic tyrosine kinases to the Ras signaling pathway. Plays a role in the inner ear and in hearing. The polypeptide is GRB2-related adapter protein (Mus musculus (Mouse)).